The primary structure comprises 388 residues: Ras-related protein Rab-26 (388 aa).

The interval 1–115 (MASTAVGLGG…HHHSQLSLTG (115 aa)) is disordered. A compositionally biased stretch (gly residues) spans 7-21 (GLGGGEGDPGAGGPP). A compositionally biased stretch (basic and acidic residues) spans 47-56 (RIEELRRRPF). Over residues 67 to 86 (PASVSASITTTTTQQQQQHH) the composition is skewed to low complexity. A compositionally biased stretch (basic residues) spans 87-109 (NPSHHHQSSHHQPSHHHHHHHHS). 197 to 204 (GDSGVGKT) lines the GTP pocket. The Effector region signature appears at 219-228 (SFSATVGIAL). Residues 246 to 250 (DTAGQ) and 304 to 307 (NKAD) contribute to the GTP site. The S-palmitoyl cysteine moiety is linked to residue cysteine 382. Cysteine 385 carries the cysteine methyl ester modification. Cysteine 385 carries S-geranylgeranyl cysteine lipidation. Residues 386-388 (RNM) constitute a propeptide, removed in mature form.

The protein belongs to the small GTPase superfamily. Rab family.

The protein resides in the cell membrane. Participates in exocrine secretion. This is Ras-related protein Rab-26 from Drosophila melanogaster (Fruit fly).